Here is a 204-residue protein sequence, read N- to C-terminus: NADH-quinone oxidoreductase subunit C (204 aa).

The protein belongs to the complex I 30 kDa subunit family. In terms of assembly, NDH-1 is composed of 14 different subunits. Subunits NuoB, C, D, E, F, and G constitute the peripheral sector of the complex.

The protein localises to the cell inner membrane. The catalysed reaction is a quinone + NADH + 5 H(+)(in) = a quinol + NAD(+) + 4 H(+)(out). In terms of biological role, NDH-1 shuttles electrons from NADH, via FMN and iron-sulfur (Fe-S) centers, to quinones in the respiratory chain. The immediate electron acceptor for the enzyme in this species is believed to be ubiquinone. Couples the redox reaction to proton translocation (for every two electrons transferred, four hydrogen ions are translocated across the cytoplasmic membrane), and thus conserves the redox energy in a proton gradient. The sequence is that of NADH-quinone oxidoreductase subunit C from Vesicomyosocius okutanii subsp. Calyptogena okutanii (strain HA).